Here is a 99-residue protein sequence, read N- to C-terminus: uncharacterized protein (99 aa).

The protein resides in the mitochondrion. This is an uncharacterized protein from Marchantia polymorpha (Common liverwort).